A 340-amino-acid polypeptide reads, in one-letter code: 4-amino-5-hydroxymethyl-2-methylpyrimidine phosphate synthase THI12 (340 aa).

Lys62 bears the N6-(pyridoxal phosphate)lysine mark. His66 is an active-site residue. 115–118 contacts pyridoxal 5'-phosphate; that stretch reads GEFG. The short motif at 195–199 is the CCCFC; essential for catalytic activity, may be the site of iron coordination element; that stretch reads CCCFC.

This sequence belongs to the NMT1/THI5 family. As to quaternary structure, homodimer. Fe cation is required as a cofactor.

It catalyses the reaction N(6)-(pyridoxal phosphate)-L-lysyl-[4-amino-5-hydroxymethyl-2-methylpyrimidine phosphate synthase] + L-histidyl-[4-amino-5-hydroxymethyl-2-methylpyrimidine phosphate synthase] + 2 Fe(3+) + 4 H2O = L-lysyl-[4-amino-5-hydroxymethyl-2-methylpyrimidine phosphate synthase] + (2S)-2-amino-5-hydroxy-4-oxopentanoyl-[4-amino-5-hydroxymethyl-2-methylpyrimidine phosphate synthase] + 4-amino-2-methyl-5-(phosphooxymethyl)pyrimidine + 3-oxopropanoate + 2 Fe(2+) + 2 H(+). It functions in the pathway cofactor biosynthesis; thiamine diphosphate biosynthesis. Its function is as follows. Responsible for the formation of the pyrimidine heterocycle in the thiamine biosynthesis pathway. Catalyzes the formation of hydroxymethylpyrimidine phosphate (HMP-P) from histidine and pyridoxal phosphate (PLP). The protein uses PLP and the active site histidine to form HMP-P, generating an inactive enzyme. The enzyme can only undergo a single turnover, which suggests it is a suicide enzyme. The sequence is that of 4-amino-5-hydroxymethyl-2-methylpyrimidine phosphate synthase THI12 from Saccharomyces cerevisiae (strain ATCC 204508 / S288c) (Baker's yeast).